A 310-amino-acid polypeptide reads, in one-letter code: tRNA uridine(34) hydroxylase (310 aa).

The Rhodanese domain maps to Asp134–Ser232. Catalysis depends on Cys192, which acts as the Cysteine persulfide intermediate.

The protein belongs to the TrhO family.

It carries out the reaction uridine(34) in tRNA + AH2 + O2 = 5-hydroxyuridine(34) in tRNA + A + H2O. Its function is as follows. Catalyzes oxygen-dependent 5-hydroxyuridine (ho5U) modification at position 34 in tRNAs. The chain is tRNA uridine(34) hydroxylase from Prochlorococcus marinus (strain MIT 9313).